The sequence spans 73 residues: Crustacean hyperglycemic hormone (73 aa).

Disulfide bonds link Cys-7/Cys-43, Cys-23/Cys-39, and Cys-26/Cys-52. Val-73 is subject to Valine amide.

The protein belongs to the arthropod CHH/MIH/GIH/VIH hormone family. Produced by the medulla terminalis X-organ in the eyestalks and transported to the sinus gland where they are stored and released.

The protein resides in the secreted. In terms of biological role, hormone found in the sinus gland of isopods and decapods which controls the blood sugar level. Has a secretagogue action over the amylase released from the midgut gland. May act as a stress hormone and may be involved in the control of molting and reproduction. The polypeptide is Crustacean hyperglycemic hormone (Jasus lalandii (Cape rock lobster)).